Here is a 161-residue protein sequence, read N- to C-terminus: Nucleotide-binding protein BceJ2315_27070 (161 aa).

This sequence belongs to the YajQ family.

In terms of biological role, nucleotide-binding protein. This is Nucleotide-binding protein BceJ2315_27070 from Burkholderia cenocepacia (strain ATCC BAA-245 / DSM 16553 / LMG 16656 / NCTC 13227 / J2315 / CF5610) (Burkholderia cepacia (strain J2315)).